A 408-amino-acid polypeptide reads, in one-letter code: Serine-rich antigen (408 aa).

2 repeat units span residues 209-214 (SVAQSE) and 230-235 (SVAQSE). The interval 209-235 (SVAQSEEHGSDSMSQSYNTCGSVAQSE) is 2 X 6 AA repeats of S-V-A-Q-S-E.

This sequence belongs to the mycobacterial PPE family.

The chain is Serine-rich antigen (sra) from Mycobacterium leprae (strain TN).